The following is a 717-amino-acid chain: Methylcrotonoyl-CoA carboxylase subunit alpha, mitochondrial (717 aa).

The transit peptide at 1 to 38 directs the protein to the mitochondrion; sequence MAAAALLAAVDRNQLRRVPILLLQPREWAWKLRTMKYG. Residues 45 to 490 form the Biotin carboxylation domain; it reads ITKVLIANRG…HTDFIPQHHK (446 aa). Lys159 contributes to the ATP binding site. One can recognise an ATP-grasp domain in the interval 163 to 360; that stretch reads KSIMAAAGVP…LVEWQLRIAA (198 aa). N6-acetyllysine occurs at positions 180 and 193. Residues Lys201 and 207–208 contribute to the ATP site; that span reads GG. Lys233 carries the N6-acetyllysine modification. Positions 251, 278, and 318 each coordinate ATP. Arg335 is an active-site residue. Lys490 is modified (N6-acetyllysine). Lys577 carries the N6-acetyllysine; alternate modification. The residue at position 577 (Lys577) is an N6-succinyllysine; alternate. In terms of domain architecture, Biotinyl-binding spans 622-711; it reads SIEVGIPVPK…NRHAPLVEFE (90 aa). Lys677 bears the N6-biotinyllysine mark.

As to quaternary structure, probably a dodecamer composed of six biotin-containing alpha subunits (MCCC1) and six beta (MCCC2) subunits. Interacts (via the biotin carboxylation domain) with SIRT4. Biotin serves as cofactor. Acetylated.

Its subcellular location is the mitochondrion matrix. It catalyses the reaction 3-methylbut-2-enoyl-CoA + hydrogencarbonate + ATP = 3-methyl-(2E)-glutaconyl-CoA + ADP + phosphate + H(+). It functions in the pathway amino-acid degradation; L-leucine degradation; (S)-3-hydroxy-3-methylglutaryl-CoA from 3-isovaleryl-CoA: step 2/3. Its function is as follows. Biotin-attachment subunit of the 3-methylcrotonyl-CoA carboxylase, an enzyme that catalyzes the conversion of 3-methylcrotonyl-CoA to 3-methylglutaconyl-CoA, a critical step for leucine and isovaleric acid catabolism. This is Methylcrotonoyl-CoA carboxylase subunit alpha, mitochondrial (Mccc1) from Mus musculus (Mouse).